A 343-amino-acid chain; its full sequence is Thioredoxin domain-containing protein 15 (343 aa).

Residues 1–20 (MQLLCWWQILLWVLGLPARG) form the signal peptide. Topologically, residues 21 to 304 (LEEDSGHTWQ…GPLPSTLVKT (284 aa)) are extracellular. Positions 86 to 95 (EDQRSTEAHD) are enriched in basic and acidic residues. The disordered stretch occupies residues 86-112 (EDQRSTEAHDGTCSAQGDEDPRCGGRE). The region spanning 162-279 (ERNVTGLENF…LKIFIFNQTG (118 aa)) is the Thioredoxin domain. Residues N170, N177, N189, and N276 are each glycosylated (N-linked (GlcNAc...) asparagine). A helical membrane pass occupies residues 305–325 (VDWLLVFSLFFLISFIMYATI). At 326–343 (RTESIRWLIPGQEQEHAE) the chain is on the cytoplasmic side.

The protein localises to the cell projection. The protein resides in the cilium membrane. In terms of biological role, acts as a positive regulator of ciliary hedgehog signaling. Required for cilia biogenesis. This Rattus norvegicus (Rat) protein is Thioredoxin domain-containing protein 15 (Txndc15).